A 750-amino-acid chain; its full sequence is Amyloid-beta A4 precursor protein-binding family A member 2 (750 aa).

Disordered stretches follow at residues 1–94 and 143–346; these read MAHR…PEEE and DSVG…IPET. Position 11 is a phosphoserine (serine 11). The span at 70-80 shows a compositional bias: polar residues; sequence GDSSSDYVNNT. Over residues 81–94 the composition is skewed to acidic residues; it reads SEEEDYDEGLPEEE. The interval 185-271 is STXBP1-binding; the sequence is HYCSSKESYQ…STEACPPSDT (87 aa). At serine 209 the chain carries Phosphoserine. The segment covering 219 to 228 has biased composition (acidic residues); it reads DLEEQEEDID. Polar residues-rich tracts occupy residues 238 to 248 and 332 to 344; these read LSMTSITSASE and SDLN…NNIP. Positions 367–556 constitute a PID domain; sequence LIDGIIFAAN…IINTQEMYND (190 aa). PDZ domains are found at residues 569 to 654 and 660 to 736; these read ELQL…NIVS and TVLI…MPAA.

Part of a multimeric complex containing STXBP1 and syntaxin-1. Binds to the cytoplasmic domain of amyloid-beta protein, and to the nuclear factor NF-kappa-B/p65 via its PDZ domain. Interacts with the N-terminal domain of NECAB3. In terms of tissue distribution, specifically expressed in neurons, predominantly of the cerebellum, hippocampus, and spinal cord. Lesser extent in neurons of the cerebral cortex and anterior thalmic nuclei.

In terms of biological role, putative function in synaptic vesicle exocytosis by binding to STXBP1, an essential component of the synaptic vesicle exocytotic machinery. May modulate processing of the amyloid-beta precursor protein (APP) and hence formation of APP-beta. This Mus musculus (Mouse) protein is Amyloid-beta A4 precursor protein-binding family A member 2 (Apba2).